Reading from the N-terminus, the 326-residue chain is Putative HTH-type transcriptional regulator y4qH (326 aa).

An HTH luxR-type domain is found at 257-322 (AVQKIPALSL…VAAIKAISLG (66 aa)). The segment at residues 281-300 (SWDIGVIMRISENTVNFHIK) is a DNA-binding region (H-T-H motif).

The protein belongs to the autoinducer-regulated transcriptional regulatory protein family.

This Sinorhizobium fredii (strain NBRC 101917 / NGR234) protein is Putative HTH-type transcriptional regulator y4qH.